A 373-amino-acid chain; its full sequence is UDP-N-acetylglucosamine--N-acetylmuramyl-(pentapeptide) pyrophosphoryl-undecaprenol N-acetylglucosamine transferase (373 aa).

UDP-N-acetyl-alpha-D-glucosamine is bound by residues 13–15 (TGG), N124, R164, S192, and Q293.

This sequence belongs to the glycosyltransferase 28 family. MurG subfamily.

It localises to the cell inner membrane. The enzyme catalyses di-trans,octa-cis-undecaprenyl diphospho-N-acetyl-alpha-D-muramoyl-L-alanyl-D-glutamyl-meso-2,6-diaminopimeloyl-D-alanyl-D-alanine + UDP-N-acetyl-alpha-D-glucosamine = di-trans,octa-cis-undecaprenyl diphospho-[N-acetyl-alpha-D-glucosaminyl-(1-&gt;4)]-N-acetyl-alpha-D-muramoyl-L-alanyl-D-glutamyl-meso-2,6-diaminopimeloyl-D-alanyl-D-alanine + UDP + H(+). Its pathway is cell wall biogenesis; peptidoglycan biosynthesis. Its function is as follows. Cell wall formation. Catalyzes the transfer of a GlcNAc subunit on undecaprenyl-pyrophosphoryl-MurNAc-pentapeptide (lipid intermediate I) to form undecaprenyl-pyrophosphoryl-MurNAc-(pentapeptide)GlcNAc (lipid intermediate II). This is UDP-N-acetylglucosamine--N-acetylmuramyl-(pentapeptide) pyrophosphoryl-undecaprenol N-acetylglucosamine transferase from Allorhizobium ampelinum (strain ATCC BAA-846 / DSM 112012 / S4) (Agrobacterium vitis (strain S4)).